We begin with the raw amino-acid sequence, 362 residues long: Probable dual-specificity RNA methyltransferase RlmN (362 aa).

The active-site Proton acceptor is the E105. The region spanning 111–344 is the Radical SAM core domain; that stretch reads HEYGNSICVT…VTIRREQGHD (234 aa). Cysteines 118 and 349 form a disulfide. [4Fe-4S] cluster-binding residues include C125, C129, and C132. Residues 175 to 176, S207, 230 to 232, and N306 each bind S-adenosyl-L-methionine; these read GE and SLH. The active-site S-methylcysteine intermediate is the C349.

It belongs to the radical SAM superfamily. RlmN family. The cofactor is [4Fe-4S] cluster.

The protein resides in the cytoplasm. It carries out the reaction adenosine(2503) in 23S rRNA + 2 reduced [2Fe-2S]-[ferredoxin] + 2 S-adenosyl-L-methionine = 2-methyladenosine(2503) in 23S rRNA + 5'-deoxyadenosine + L-methionine + 2 oxidized [2Fe-2S]-[ferredoxin] + S-adenosyl-L-homocysteine. The catalysed reaction is adenosine(37) in tRNA + 2 reduced [2Fe-2S]-[ferredoxin] + 2 S-adenosyl-L-methionine = 2-methyladenosine(37) in tRNA + 5'-deoxyadenosine + L-methionine + 2 oxidized [2Fe-2S]-[ferredoxin] + S-adenosyl-L-homocysteine. In terms of biological role, specifically methylates position 2 of adenine 2503 in 23S rRNA and position 2 of adenine 37 in tRNAs. The chain is Probable dual-specificity RNA methyltransferase RlmN from Bacillus thuringiensis subsp. konkukian (strain 97-27).